A 1172-amino-acid chain; its full sequence is Tudor domain-containing protein 1 (1172 aa).

2 disordered regions span residues 1–59 (MMPR…KNNF) and 72–136 (QEDS…KKSH). Low complexity-rich tracts occupy residues 75–86 (SSVVSSNPAVVN) and 103–117 (NPVS…SPPN). The span at 118–129 (QVKTKPSSNVTP) shows a compositional bias: polar residues. Residues C163, C166, C174, C177, C183, C187, H195, and C199 each contribute to the Zn(2+) site. The MYND-type zinc-finger motif lies at 163-199 (CHRCGLFGSLRCSQCKQTYYCSTACQRRDWSSHSTIC). 4 consecutive Tudor domains span residues 307-367 (LPVK…LDLF), 536-595 (YPTI…LLDL), 756-815 (KAEI…FLLL), and 982-1040 (RPRT…HLEL).

This sequence belongs to the TDRD1 family. In terms of assembly, found in a mRNP complex, at least composed of TDRD1, TDRD6, TDRD7 and DDX4. Interacts with MAEL. Interacts with PIWIL1, PIWIL2 and PIWIL4 (when methylated on arginine residues). Interacts with TDRD12. Testis and ovary specific. Present in germ-line cells and is most abundant in fetal prospermatogonia and postnatal primary spermatocytes (at protein level).

The protein localises to the cytoplasm. Its function is as follows. Plays a central role during spermatogenesis by participating in the repression transposable elements and preventing their mobilization, which is essential for the germline integrity. Acts via the piRNA metabolic process, which mediates the repression of transposable elements during meiosis by forming complexes composed of piRNAs and Piwi proteins and governs the methylation and subsequent repression of transposons. Required for the localization of Piwi proteins to the meiotic nuage. Involved in the piRNA metabolic process by ensuring the entry of correct transcripts into the normal piRNA pool and limiting the entry of cellular transcripts into the piRNA pathway. May act by allowing the recruitment of piRNA biogenesis or loading factors that ensure the correct entry of transcripts and piRNAs into Piwi proteins. The chain is Tudor domain-containing protein 1 (Tdrd1) from Mus musculus (Mouse).